A 358-amino-acid chain; its full sequence is MTRSSDTPSSSRASLSYKDAGVDIDAGNALVERIKGVAKRTSRPEVMGGLGGFGALCQLPTGYREPVLVSGTDGVGTKLRLAMDLARHDTIGIDLVAMCVNDLVVAGAEPLFFLDYYATGKLDVDIAADVVTGIGEGCAQAGCALIGGETAEMPGMYAGSDYDLAGFCVGVVEKSEILDGSRVAEGDVLLGLASSGPHSNGYSLIRKIIERGQADLEQEIDGIPLRDALLAPTRIYVKSLLSLIKESDVTVHALSHITGGGLLENVPRVLPDTLAARIDAASWTRPAVFDWLQREGNVDEHEMHRVLNCGIGMVVVVPAAQAERAQAALEAAGETVHRLGEIVPRQDEEEQVRLENVR.

Belongs to the AIR synthase family.

The protein resides in the cytoplasm. It catalyses the reaction 2-formamido-N(1)-(5-O-phospho-beta-D-ribosyl)acetamidine + ATP = 5-amino-1-(5-phospho-beta-D-ribosyl)imidazole + ADP + phosphate + H(+). Its pathway is purine metabolism; IMP biosynthesis via de novo pathway; 5-amino-1-(5-phospho-D-ribosyl)imidazole from N(2)-formyl-N(1)-(5-phospho-D-ribosyl)glycinamide: step 2/2. In Chromohalobacter salexigens (strain ATCC BAA-138 / DSM 3043 / CIP 106854 / NCIMB 13768 / 1H11), this protein is Phosphoribosylformylglycinamidine cyclo-ligase.